Reading from the N-terminus, the 356-residue chain is 3-isopropylmalate dehydrogenase (356 aa).

Residue 73–86 coordinates NAD(+); the sequence is GTQYDGLPREKRPE. Positions 93, 103, 131, and 220 each coordinate substrate. Asp-220, Asp-244, and Asp-248 together coordinate Mg(2+). 278 to 290 lines the NAD(+) pocket; it reads GSAPDIAGKGIAN.

The protein belongs to the isocitrate and isopropylmalate dehydrogenases family. LeuB type 1 subfamily. In terms of assembly, homodimer. Mg(2+) is required as a cofactor. Requires Mn(2+) as cofactor.

Its subcellular location is the cytoplasm. It catalyses the reaction (2R,3S)-3-isopropylmalate + NAD(+) = 4-methyl-2-oxopentanoate + CO2 + NADH. It functions in the pathway amino-acid biosynthesis; L-leucine biosynthesis; L-leucine from 3-methyl-2-oxobutanoate: step 3/4. In terms of biological role, catalyzes the oxidation of 3-carboxy-2-hydroxy-4-methylpentanoate (3-isopropylmalate) to 3-carboxy-4-methyl-2-oxopentanoate. The product decarboxylates to 4-methyl-2 oxopentanoate. The chain is 3-isopropylmalate dehydrogenase from Nitrosomonas europaea (strain ATCC 19718 / CIP 103999 / KCTC 2705 / NBRC 14298).